The sequence spans 812 residues: Fibrous sheath CABYR-binding protein (812 aa).

The tract at residues 1 to 66 (MEESDEPEQP…SIGNIPGGKA (66 aa)) is disordered. Phosphoserine is present on residues Ser25, Ser57, Ser125, Ser133, Ser184, and Ser273. Disordered regions lie at residues 269–333 (IQAP…PKGT), 367–388 (DSGRAESTTVEEATGEVQPPLS), 424–547 (FEDQ…PPSL), and 672–741 (PAEE…PSVK). Over residues 275–286 (AKETSAAETTAK) the composition is skewed to low complexity. Over residues 488-501 (EVPPLPTEEWPLPP) the composition is skewed to pro residues. The span at 502 to 513 (VTEESPAEVTPP) shows a compositional bias: low complexity. Residues 514–528 (ETEEGPIEPAEEGPE) show a composition bias toward acidic residues.

In terms of assembly, interacts with CABYR.

Its subcellular location is the cell projection. The protein localises to the cilium. It localises to the flagellum. Functionally, may be involved in the later stages of fibrous sheath biogenesis. Binds calcium. This is Fibrous sheath CABYR-binding protein from Rattus norvegicus (Rat).